The primary structure comprises 493 residues: Membrane-bound lytic murein transglycosylase F (493 aa).

A signal peptide spans 1–21 (MKRLRFNYLLIGLITVLLALA). A non-LT domain region spans residues 22 to 268 (LWPSIPWYGG…RLDEKYLGHV (247 aa)). Residues 269-493 (GTFDYVDTRT…LNPVSALPLP (225 aa)) are LT domain. Glutamate 313 is an active-site residue.

In the N-terminal section; belongs to the bacterial solute-binding protein 3 family. The protein in the C-terminal section; belongs to the transglycosylase Slt family.

It is found in the cell outer membrane. The enzyme catalyses Exolytic cleavage of the (1-&gt;4)-beta-glycosidic linkage between N-acetylmuramic acid (MurNAc) and N-acetylglucosamine (GlcNAc) residues in peptidoglycan, from either the reducing or the non-reducing ends of the peptidoglycan chains, with concomitant formation of a 1,6-anhydrobond in the MurNAc residue.. Functionally, murein-degrading enzyme that degrades murein glycan strands and insoluble, high-molecular weight murein sacculi, with the concomitant formation of a 1,6-anhydromuramoyl product. Lytic transglycosylases (LTs) play an integral role in the metabolism of the peptidoglycan (PG) sacculus. Their lytic action creates space within the PG sacculus to allow for its expansion as well as for the insertion of various structures such as secretion systems and flagella. The chain is Membrane-bound lytic murein transglycosylase F from Erwinia tasmaniensis (strain DSM 17950 / CFBP 7177 / CIP 109463 / NCPPB 4357 / Et1/99).